We begin with the raw amino-acid sequence, 176 residues long: MRCPYCGSLETQVKDSRPTDDASAIRRRRVCPDCGGRFTTFERVQLRELTVLKKSGRRAPFEREKLMRSLEIALRKRPVEPERVERMVNGIVRQLESQGESEIASDRIGELVMEGLRALDSVAYVRFASVYRNFREARDFNALIDELDGAAQPEAPSKDDGGTDEPPAKTRAPTRA.

A zinc finger spans residues 3–34 (CPYCGSLETQVKDSRPTDDASAIRRRRVCPDC). One can recognise an ATP-cone domain in the interval 49–139 (LTVLKKSGRR…VYRNFREARD (91 aa)). The segment at 147–176 (LDGAAQPEAPSKDDGGTDEPPAKTRAPTRA) is disordered.

This sequence belongs to the NrdR family. It depends on Zn(2+) as a cofactor.

Negatively regulates transcription of bacterial ribonucleotide reductase nrd genes and operons by binding to NrdR-boxes. The polypeptide is Transcriptional repressor NrdR (Methylocella silvestris (strain DSM 15510 / CIP 108128 / LMG 27833 / NCIMB 13906 / BL2)).